A 917-amino-acid chain; its full sequence is MLX-interacting protein (917 aa).

Positions 1 to 72 are disordered; that stretch reads MAADVFMCSP…AGPGREEPPR (72 aa). Ala-2 carries the N-acetylalanine modification. A phosphoserine mark is found at Ser-9, Ser-33, and Ser-39. A compositionally biased stretch (acidic residues) spans 27–37; sequence PEDDDDSDTDE. The segment covering 47 to 57 has biased composition (low complexity); that stretch reads ATSARAHASAA. Residues 73–327 are required for cytoplasmic localization; sequence RQQIIHSGHF…PLQPNLDFMD (255 aa). Positions 322-445 are transactivation domain; the sequence is NLDFMDTFEP…LLSPGPAPAP (124 aa). 2 disordered regions span residues 347 to 402 and 632 to 711; these read LPPP…CERT and SHST…TDPK. Polar residues predominate over residues 378 to 388; the sequence is LPNSLITSSAA. The span at 632-643 shows a compositional bias: low complexity; sequence SHSTSSQPSPVS. A Phosphoserine modification is found at Ser-667. Positions 670–685 are enriched in polar residues; that stretch reads VPATGSSRDCPNSGQA. Residues 686–704 show a composition bias toward low complexity; it reads SPCPSEQSPSPQSPQNNCS. The 51-residue stretch at 717–767 folds into the bHLH domain; that stretch reads KNRQKHISAEQKRRFNIRMGFNTLNSLISNNSKQTSHAITLQKTMEYITKL. Residues 767–788 are leucine-zipper; the sequence is LQQERMQMQEEARRLREEIEEL. Positions 830 to 879 are mediates heterotypic interactions between MLXIP and MLX and is required for cytoplasmic localization; the sequence is WKFWIFSMIIKPLFESFKGMVSTSSLEEFHRTALSWLDQHCSLPVLRPMV. Residues 897-917 form a disordered region; that stretch reads SQLPEQASEAVTRMGKRSGES.

In terms of assembly, efficient DNA binding requires dimerization with another bHLH protein. Binds DNA as a homodimer or a heterodimer with MLX/TCFL4.

It is found in the cytoplasm. It localises to the nucleus. The protein localises to the mitochondrion outer membrane. Binds DNA as a heterodimer with MLX/TCFL4 and activates transcription. Binds to the canonical E box sequence 5'-CACGTG-3'. Plays a role in transcriptional activation of glycolytic target genes. Involved in glucose-responsive gene regulation. Regulates transcription in response to changes in cellular carbohydrate abundance such as occurs during fasting to feeding metabolic transition. Refeeding stimulates MLXIPL/ChREBP transcription factor, leading to increased BCKDK to PPM1K expression ratio, phosphorylation and activation of ACLY that ultimately results in the generation of malonyl-CoA and oxaloacetate immediate substrates of de novo lipogenesis and gluconeogenesis, respectively. This Mus musculus (Mouse) protein is MLX-interacting protein.